The primary structure comprises 651 residues: Nucleolin (651 aa).

Residues 1–11 (MVKLAKGAKTQ) are compositionally biased toward low complexity. A disordered region spans residues 1-230 (MVKLAKGAKT…AKKTKTDTAS (230 aa)). Residues 26-45 (EDSEEEEDMEEDDSSDEEVE) show a composition bias toward acidic residues. A compositionally biased stretch (low complexity) spans 54–79 (KKTATPAKATPGKAATPGKKGATPAK). Acidic residues predominate over residues 89-101 (SEEEEDDSDEEAE). Residues 106–116 (IKNKPVAKKAV) are compositionally biased toward basic residues. Composition is skewed to acidic residues over residues 122–134 (SEED…ESEE), 155–168 (SEEE…DEPM), and 183–204 (AEED…EEEQ). Ser-155 is modified (phosphoserine). A compositionally biased stretch (basic and acidic residues) spans 219-228 (PEAKKTKTDT). RRM domains are found at residues 233-309 (LSIF…KAMA), 325-399 (RTLF…FTGE), 415-488 (KVLV…FSQG), and 503-578 (KTLF…FAKP). Residues 574–651 (DFAKPKGDSQ…GQGKKMRFDD (78 aa)) are disordered. Over residues 585–644 (GGRGGFGRGGGFRGGRGGRGGGGGRGFGGRGGGRGRGGFGGRGGGGFRGGQGGGFRGGQG) the composition is skewed to gly residues.

It is found in the nucleus. It localises to the nucleolus. Functionally, nucleolin is the major nucleolar protein of growing eukaryotic cells. It is found associated with intranucleolar chromatin and pre-ribosomal particles. It induces chromatin decondensation by binding to histone H1. It is thought to play a role in pre-rRNA transcription and ribosome assembly. The protein is Nucleolin (ncl) of Xenopus laevis (African clawed frog).